The primary structure comprises 166 residues: Specificity protein transcription factor 2 (166 aa).

A disordered region spans residues 17-45; that stretch reads SYHHSLPSISPPDSPASTSASSSSSSIGA. Residues 31–42 show a composition bias toward low complexity; that stretch reads PASTSASSSSSS. 3 C2H2-type zinc fingers span residues 77-101, 107-131, and 137-160; these read HLCS…LRKH, FVCD…KRTH, and FACK…TSVH.

Belongs to the Sp1 C2H2-type zinc-finger protein family.

Functionally, transcription factor. Probably acts downstream of the Wnt signaling pathway. The sequence is that of Specificity protein transcription factor 2 from Caenorhabditis elegans.